A 69-amino-acid chain; its full sequence is Pancreatic secretory trypsin inhibitor (69 aa).

The 58-residue stretch at 8–65 (TGTEAACSNYDLKKGCAKIFDPVCGTDNILYSNECLLCFQNLQRKTNVRIKRRGTCQE) folds into the Kazal-like domain. 3 disulfide bridges follow: Cys14–Cys45, Cys23–Cys42, and Cys31–Cys63.

The protein resides in the secreted. Functionally, this is a trypsin inhibitor, its physiological function is to prevent the trypsin-catalyzed premature activation of zymogens within the pancreas. This chain is Pancreatic secretory trypsin inhibitor (SPINK1), found in Struthio camelus (Common ostrich).